The sequence spans 249 residues: Myelin protein P0 (249 aa).

The signal sequence occupies residues 1-29; that stretch reads MALGAIGDGRLLLLLVGLLSASGPSPTLA. Residues 30–143 form the Ig-like V-type domain; it reads IHVYTPREVY…DIVGKSSQVT (114 aa). Over 30 to 153 the chain is Extracellular; sequence IHVYTPREVY…LYVLEKVPTR (124 aa). Cys50 and Cys127 are disulfide-bonded. Asn122 carries N-linked (GlcNAc...) asparagine glycosylation. The helical transmembrane segment at 154–179 threads the bilayer; that stretch reads YGVVLGSIIGGVLLLVALLVAVVYLV. At 180 to 249 the chain is on the cytoplasmic side; the sequence is RFCWLRRQAV…APGEARKDKK (70 aa). The interval 227 to 249 is disordered; it reads RSAKAAAEKKSKGAPGEARKDKK.

Belongs to the myelin P0 protein family. In terms of tissue distribution, found only in peripheral nervous system Schwann cells.

It localises to the cell membrane. Functionally, is an adhesion molecule necessary for normal myelination in the peripheral nervous system. It mediates adhesion between adjacent myelin wraps and ultimately drives myelin compaction. The polypeptide is Myelin protein P0 (MPZ) (Gallus gallus (Chicken)).